A 126-amino-acid polypeptide reads, in one-letter code: Large ribosomal subunit protein bL19 (126 aa).

Belongs to the bacterial ribosomal protein bL19 family.

Functionally, this protein is located at the 30S-50S ribosomal subunit interface and may play a role in the structure and function of the aminoacyl-tRNA binding site. The sequence is that of Large ribosomal subunit protein bL19 from Nitrobacter winogradskyi (strain ATCC 25391 / DSM 10237 / CIP 104748 / NCIMB 11846 / Nb-255).